The primary structure comprises 368 residues: Cobalt-precorrin-5B C(1)-methyltransferase (368 aa).

This sequence belongs to the CbiD family.

The enzyme catalyses Co-precorrin-5B + S-adenosyl-L-methionine = Co-precorrin-6A + S-adenosyl-L-homocysteine. Its pathway is cofactor biosynthesis; adenosylcobalamin biosynthesis; cob(II)yrinate a,c-diamide from sirohydrochlorin (anaerobic route): step 6/10. Its function is as follows. Catalyzes the methylation of C-1 in cobalt-precorrin-5B to form cobalt-precorrin-6A. This chain is Cobalt-precorrin-5B C(1)-methyltransferase, found in Brucella abortus (strain S19).